Consider the following 177-residue polypeptide: CDP-diacylglycerol--serine O-phosphatidyltransferase (177 aa).

5 helical membrane-spanning segments follow: residues Ile-4–Leu-24, Ile-28–Ala-48, Met-77–Thr-97, Leu-116–Phe-136, and Pro-140–Phe-160.

The protein belongs to the CDP-alcohol phosphatidyltransferase class-I family.

The protein localises to the cell membrane. The catalysed reaction is a CDP-1,2-diacyl-sn-glycerol + L-serine = a 1,2-diacyl-sn-glycero-3-phospho-L-serine + CMP + H(+). The protein is CDP-diacylglycerol--serine O-phosphatidyltransferase (pssA) of Bacillus subtilis (strain 168).